Consider the following 588-residue polypeptide: Proteasome-associated ATPase (588 aa).

A compositionally biased stretch (basic and acidic residues) spans 1-10; it reads MAAHDDDINR. Residues 1–22 form a disordered region; that stretch reads MAAHDDDINRGTRPARGSEDPA. A coiled-coil region spans residues 47-94; sequence RILEERIVELQTNLAGVSAQNERLANTLREARDQIVALKEEVDRLAQP. Residue 276 to 281 coordinates ATP; it reads GCGKTL. Positions 587–588 are docks into pockets in the proteasome alpha-ring; that stretch reads YL.

Belongs to the AAA ATPase family. As to quaternary structure, homohexamer. Assembles into a hexameric ring structure that caps the 20S proteasome core. Strongly interacts with the prokaryotic ubiquitin-like protein Pup through a hydrophobic interface; the interacting region of ARC lies in its N-terminal coiled-coil domain. There is one Pup binding site per ARC hexamer ring. Upon ATP-binding, the C-terminus of ARC interacts with the alpha-rings of the proteasome core, possibly by binding to the intersubunit pockets.

It functions in the pathway protein degradation; proteasomal Pup-dependent pathway. ATPase which is responsible for recognizing, binding, unfolding and translocation of pupylated proteins into the bacterial 20S proteasome core particle. May be essential for opening the gate of the 20S proteasome via an interaction with its C-terminus, thereby allowing substrate entry and access to the site of proteolysis. Thus, the C-termini of the proteasomal ATPase may function like a 'key in a lock' to induce gate opening and therefore regulate proteolysis. The chain is Proteasome-associated ATPase from Streptomyces griseus subsp. griseus (strain JCM 4626 / CBS 651.72 / NBRC 13350 / KCC S-0626 / ISP 5235).